A 428-amino-acid polypeptide reads, in one-letter code: Adenylosuccinate synthetase 1 (428 aa).

Residues 12 to 18 (GDEGKGK) and 40 to 42 (GHT) each bind GTP. D13 acts as the Proton acceptor in catalysis. The Mg(2+) site is built by D13 and G40. Residues 13–16 (DEGK), 38–41 (NAGH), T133, R147, N224, T239, and R303 contribute to the IMP site. The active-site Proton donor is the H41. 299–305 (TTTGRRR) contributes to the substrate binding site. Residues R305, 331–333 (KLD), and 413–415 (GVG) contribute to the GTP site.

It belongs to the adenylosuccinate synthetase family. Homodimer. Mg(2+) serves as cofactor.

Its subcellular location is the cytoplasm. The enzyme catalyses IMP + L-aspartate + GTP = N(6)-(1,2-dicarboxyethyl)-AMP + GDP + phosphate + 2 H(+). It functions in the pathway purine metabolism; AMP biosynthesis via de novo pathway; AMP from IMP: step 1/2. Plays an important role in the de novo pathway and in the salvage pathway of purine nucleotide biosynthesis. Catalyzes the first committed step in the biosynthesis of AMP from IMP. The chain is Adenylosuccinate synthetase 1 from Laccaria bicolor (strain S238N-H82 / ATCC MYA-4686) (Bicoloured deceiver).